The sequence spans 712 residues: Sesterterpene synthase btcA (712 aa).

The tract at residues 1–332 is terpene cyclase; it reads MTTIWEHCVD…CANCPRHHAW (332 aa). Asp-96 contributes to the Mg(2+) binding site. Residues Asp-96, Asn-234, 238–242, and 328–329 each bind substrate; these read SWDRE and RH. The DDXXD 1 motif lies at 96-100; it reads DDLCD. The NSE/DTE signature appears at 234 to 242; sequence NDYWSWDRE. Positions 333-706 are prenyltransferase; that stretch reads RDEESSPSER…VMRIVLSRLS (374 aa). The tract at residues 334–373 is disordered; the sequence is DEESSPSERSFSPSNEGIEDPRLSPGASTTSSMSQKSSPA. 2 stretches are compositionally biased toward low complexity: residues 340–349 and 361–373; these read SERSFSPSNE and STTS…SSPA. Lys-414, Arg-417, and His-446 together coordinate isopentenyl diphosphate. Mg(2+) contacts are provided by Asp-453 and Asp-457. Residues 453-457 carry the DDXXD 2 motif; that stretch reads DDIED. Arg-462 is a dimethylallyl diphosphate binding site. Residue Arg-463 participates in isopentenyl diphosphate binding. Lys-540, Thr-541, Gln-580, Asn-587, Lys-597, and Lys-607 together coordinate dimethylallyl diphosphate.

It in the N-terminal section; belongs to the terpene synthase family. In the C-terminal section; belongs to the FPP/GGPP synthase family. As to quaternary structure, hexamer. It depends on Mg(2+) as a cofactor.

The enzyme catalyses isopentenyl diphosphate + (2E,6E)-farnesyl diphosphate = (2E,6E,10E)-geranylgeranyl diphosphate + diphosphate. The catalysed reaction is isopentenyl diphosphate + (2E,6E,10E)-geranylgeranyl diphosphate = (2E,6E,10E,14E)-geranylfarnesyl diphosphate + diphosphate. Its pathway is secondary metabolite biosynthesis; terpenoid biosynthesis. In terms of biological role, bifunctional terpene synthase; part of the gene cluster that mediates the biosynthesis of betaestacins. The bifunctional terpene synthase btcA converts isopentenyl diphosphate (IPP) and dimethylallyl diphosphate (DMAPP) into the sesterterpene betaestacin I. The C-terminal prenyltransferase (PT) domain of btcA catalyzes formation of GFPP, whereas the N-terminal terpene cyclase (TC) domain catalyzes the cyclization of GFPP into betaestacin I. The cytochrome P450 monooxygenase btcB oxidizes the C25 methyl group of betaestacin I to yield the carboxylic acid betaestacin IV via the alcohol betaestacin III. The cytochrome P450 monooxygenase btcC further catalyzes the multistep oxidation of betaestacin IV to produce several compounds, including betaestacins Va, Vb, Vc and VI. This is Sesterterpene synthase btcA from Colletotrichum orbiculare (strain 104-T / ATCC 96160 / CBS 514.97 / LARS 414 / MAFF 240422) (Cucumber anthracnose fungus).